The sequence spans 477 residues: Proton extrusion protein PxcA (477 aa).

3 helical membrane-spanning segments follow: residues 239-259, 354-374, and 437-457; these read FILL…ITFV, GIKN…IIST, and FNFL…KYWI.

Belongs to the CemA family.

Its subcellular location is the cell inner membrane. Its function is as follows. Required for H(+) efflux immediately after light irradiation to form a rapid H(+) concentration gradient across the thylakoid membranes. Together with PxcL, contributes to transient H(+) uptake following dark to light transition. The sequence is that of Proton extrusion protein PxcA from Trichodesmium erythraeum (strain IMS101).